The following is a 214-amino-acid chain: Orotate phosphoribosyltransferase (214 aa).

K26 serves as a coordination point for 5-phospho-alpha-D-ribose 1-diphosphate. 34–35 (FF) provides a ligand contact to orotate. 5-phospho-alpha-D-ribose 1-diphosphate contacts are provided by residues 72–73 (YK), R99, K100, K103, H105, and 124–132 (DDVITAGTA). Residues T128 and R156 each contribute to the orotate site.

This sequence belongs to the purine/pyrimidine phosphoribosyltransferase family. PyrE subfamily. As to quaternary structure, homodimer. The cofactor is Mg(2+).

It catalyses the reaction orotidine 5'-phosphate + diphosphate = orotate + 5-phospho-alpha-D-ribose 1-diphosphate. Its pathway is pyrimidine metabolism; UMP biosynthesis via de novo pathway; UMP from orotate: step 1/2. Functionally, catalyzes the transfer of a ribosyl phosphate group from 5-phosphoribose 1-diphosphate to orotate, leading to the formation of orotidine monophosphate (OMP). This Actinobacillus succinogenes (strain ATCC 55618 / DSM 22257 / CCUG 43843 / 130Z) protein is Orotate phosphoribosyltransferase.